Reading from the N-terminus, the 210-residue chain is Peptidyl-tRNA hydrolase (210 aa).

Y14 provides a ligand contact to tRNA. H19 functions as the Proton acceptor in the catalytic mechanism. The tRNA site is built by F64, N66, and N112.

Belongs to the PTH family. In terms of assembly, monomer.

Its subcellular location is the cytoplasm. It catalyses the reaction an N-acyl-L-alpha-aminoacyl-tRNA + H2O = an N-acyl-L-amino acid + a tRNA + H(+). Functionally, hydrolyzes ribosome-free peptidyl-tRNAs (with 1 or more amino acids incorporated), which drop off the ribosome during protein synthesis, or as a result of ribosome stalling. Catalyzes the release of premature peptidyl moieties from peptidyl-tRNA molecules trapped in stalled 50S ribosomal subunits, and thus maintains levels of free tRNAs and 50S ribosomes. This is Peptidyl-tRNA hydrolase from Methylorubrum populi (strain ATCC BAA-705 / NCIMB 13946 / BJ001) (Methylobacterium populi).